The sequence spans 379 residues: Chaperone protein DnaJ (379 aa).

A J domain is found at 5–70; sequence DYYEILGLDK…QKKAQYDQFG (66 aa). The CR-type zinc-finger motif lies at 135–217; sequence GVEKEISVTR…CRGKGIVRKH (83 aa). Cys148, Cys151, Cys165, Cys168, Cys191, Cys194, Cys205, and Cys208 together coordinate Zn(2+). CXXCXGXG motif repeat units lie at residues 148 to 155, 165 to 172, 191 to 198, and 205 to 212; these read CETCNGTG, CDKCNGTG, CDKCGGRG, and CEECRGKG.

Belongs to the DnaJ family. As to quaternary structure, homodimer. The cofactor is Zn(2+).

Its subcellular location is the cytoplasm. Its function is as follows. Participates actively in the response to hyperosmotic and heat shock by preventing the aggregation of stress-denatured proteins and by disaggregating proteins, also in an autonomous, DnaK-independent fashion. Unfolded proteins bind initially to DnaJ; upon interaction with the DnaJ-bound protein, DnaK hydrolyzes its bound ATP, resulting in the formation of a stable complex. GrpE releases ADP from DnaK; ATP binding to DnaK triggers the release of the substrate protein, thus completing the reaction cycle. Several rounds of ATP-dependent interactions between DnaJ, DnaK and GrpE are required for fully efficient folding. Also involved, together with DnaK and GrpE, in the DNA replication of plasmids through activation of initiation proteins. The chain is Chaperone protein DnaJ from Clostridium kluyveri (strain ATCC 8527 / DSM 555 / NBRC 12016 / NCIMB 10680 / K1).